We begin with the raw amino-acid sequence, 245 residues long: 8-amino-3,8-dideoxy-manno-octulosonate cytidylyltransferase (245 aa).

Belongs to the KdsB family.

The protein localises to the cytoplasm. It carries out the reaction 8-amino-3,8-dideoxy-alpha-D-manno-octulosonate + CTP = CMP-8-amino-3,8-dideoxy-alpha-D-manno-oct-2-ulosonate + diphosphate. Its pathway is bacterial outer membrane biogenesis; lipopolysaccharide biosynthesis. In terms of biological role, activates KDO8N (a required 8-carbon sugar) for incorporation into bacterial lipopolysaccharide in the Shewanella genus. The polypeptide is 8-amino-3,8-dideoxy-manno-octulosonate cytidylyltransferase (Shewanella frigidimarina (strain NCIMB 400)).